The following is a 230-amino-acid chain: Phosducin-like protein 1 (230 aa).

Met-1 carries the post-translational modification N-acetylmethionine. Residues Ala-16 to Lys-166 enclose the Phosducin domain. The stretch at Asp-25–Asp-79 forms a coiled coil. Residues Tyr-81 to Ile-230 are thioredoxin fold.

It belongs to the phosducin family. Interacts with the G protein beta-gamma subunit complex (STE4-STE18 complex).

It is found in the cytoplasm. Functionally, not essential for growth. Inhibits early G-protein signaling events following pheromone stimulation. May help create heterodimerizable beta-tubulin by facilitating the efficient transfer of nascent beta-tubulin polypeptides to the folding apparatus. The chain is Phosducin-like protein 1 (PLP1) from Saccharomyces cerevisiae (strain ATCC 204508 / S288c) (Baker's yeast).